An 865-amino-acid polypeptide reads, in one-letter code: Protein translocase subunit SecA (865 aa).

ATP is bound by residues Q93, 111 to 115, and D501; that span reads GEGKT. Residues C841, C843, C852, and C853 each coordinate Zn(2+).

This sequence belongs to the SecA family. In terms of assembly, monomer and homodimer. Part of the essential Sec protein translocation apparatus which comprises SecA, SecYEG and auxiliary proteins SecDF-YajC and YidC. Zn(2+) is required as a cofactor.

It localises to the cell inner membrane. Its subcellular location is the cytoplasm. It catalyses the reaction ATP + H2O + cellular proteinSide 1 = ADP + phosphate + cellular proteinSide 2.. In terms of biological role, part of the Sec protein translocase complex. Interacts with the SecYEG preprotein conducting channel. Has a central role in coupling the hydrolysis of ATP to the transfer of proteins into and across the cell membrane, serving as an ATP-driven molecular motor driving the stepwise translocation of polypeptide chains across the membrane. The chain is Protein translocase subunit SecA from Helicobacter pylori (strain J99 / ATCC 700824) (Campylobacter pylori J99).